The primary structure comprises 225 residues: MALLISLPGETPAMAQILLLLSSACLHAGNSARSNGGNDFGVNQPERCSGVQGGSIDIPFSFYFPWKLAKDPQMSIAWRWKDFFGHFIYNSSMPFIHEHFKGRLILNWTQGQTSGVLRILNFKESDQTWYFCRVFLQTTEGIKFWQSLPGTQLTLTQALNTTMRSPFIVTSEFTTAGLEHTRDKRNPSLMNLGAMVTMLLAKVVVIILVYGWMIFLRWKQRPDPA.

The first 31 residues, Met1 to Ser31, serve as a signal peptide directing secretion. Residues Ala32 to Met195 are Extracellular-facing. Residues Asn90, Asn107, and Asn160 are each glycosylated (N-linked (GlcNAc...) asparagine). A helical membrane pass occupies residues Val196–Leu216. Topologically, residues Arg217–Ala225 are cytoplasmic.

It localises to the membrane. Functionally, paired receptors consist of highly related activating and inhibitory receptors and are widely involved in the regulation of the immune system. PILRB2 is probably a cellular signaling activating receptor that associates with ITAM-bearing adapter molecules on the cell surface. In Mus musculus (Mouse), this protein is Paired immunoglobulin-like type 2 receptor beta-2 (Pilrb2).